A 72-amino-acid polypeptide reads, in one-letter code: Translation initiation factor IF-1 (72 aa).

Residues 1 to 72 form the S1-like domain; that stretch reads MAKDDVIEVE…TRGRITYRFK (72 aa).

This sequence belongs to the IF-1 family. As to quaternary structure, component of the 30S ribosomal translation pre-initiation complex which assembles on the 30S ribosome in the order IF-2 and IF-3, IF-1 and N-formylmethionyl-tRNA(fMet); mRNA recruitment can occur at any time during PIC assembly.

The protein resides in the cytoplasm. One of the essential components for the initiation of protein synthesis. Stabilizes the binding of IF-2 and IF-3 on the 30S subunit to which N-formylmethionyl-tRNA(fMet) subsequently binds. Helps modulate mRNA selection, yielding the 30S pre-initiation complex (PIC). Upon addition of the 50S ribosomal subunit IF-1, IF-2 and IF-3 are released leaving the mature 70S translation initiation complex. In Streptococcus pneumoniae serotype 2 (strain D39 / NCTC 7466), this protein is Translation initiation factor IF-1.